Here is a 417-residue protein sequence, read N- to C-terminus: Maltodextrin-binding protein MdxE (417 aa).

The N-terminal stretch at 1-22 (MVLLKKGFAILAASFLAIGLAA) is a signal peptide. A lipid anchor (N-palmitoyl cysteine) is attached at C23. A lipid anchor (S-diacylglycerol cysteine) is attached at C23.

Belongs to the bacterial solute-binding protein 1 family. In terms of assembly, the complex is composed of two ATP-binding proteins (MsmX), two transmembrane proteins (MdxF and MdxG) and a solute-binding protein (MdxE).

It is found in the cell membrane. Inhibited by glucose and lactose. Functionally, part of the ABC transporter complex involved in maltodextrin import. Binds maltodextrin. Can also bind maltose with low affinity, but is not involved in its uptake. The polypeptide is Maltodextrin-binding protein MdxE (mdxE) (Bacillus subtilis (strain 168)).